An 840-amino-acid chain; its full sequence is Phosphatidylglycerol lysyltransferase (840 aa).

The Cytoplasmic portion of the chain corresponds to 1–8 (MNQEVKNK). The helical transmembrane segment at 9–29 (IFSILKITFATALFIFVAITL) threads the bilayer. The Extracellular portion of the chain corresponds to 30–52 (YRELSGINFKDTLVEFSKINRMS). A helical membrane pass occupies residues 53-73 (LVLLFIGGGASLVILSMYDVI). At 74–89 (LSRALKMDISLGKVLR) the chain is on the cytoplasmic side. The helical transmembrane segment at 90 to 110 (VSYIINALNAIVGFGGFIGAG) threads the bilayer. Over 111-128 (VRAMVYKNYTHDKKKLVH) the chain is Extracellular. A helical transmembrane segment spans residues 129-149 (FISLILISMLTGLSLLSLLIV). Over 150 to 161 (FHVFDASLILDK) the chain is Cytoplasmic. Residues 162–182 (ITWVRWVLYVVSFFLPLFIIY) form a helical membrane-spanning segment. The Extracellular segment spans residues 183 to 200 (SMVRPPDKNNRFVGLYCT). A helical membrane pass occupies residues 201 to 221 (LVSCVEWLAAAVVLYFCGVIV). Residues 222-229 (DAHVSFMS) are Cytoplasmic-facing. A helical transmembrane segment spans residues 230 to 250 (FIAIFIIAALSGLVSFIPGGF). The Extracellular segment spans residues 251–271 (GAFDLVVLLGFKTLGVPEEKV). A helical membrane pass occupies residues 272–292 (LLMLLLYRFAYYFVPVIIALI). The Cytoplasmic portion of the chain corresponds to 293 to 337 (LSSFEFGTSAKKYIEGSKYFIPAKDVTSFLMSYQKDIIAKIPSLS). Residues 338 to 358 (LAILVFFTSMIFFVNNLTIVY) form a helical membrane-spanning segment. Residues 359-369 (DALYDGNHLTY) are Extracellular-facing. The chain crosses the membrane as a helical span at residues 370–390 (YILLAIHTSACLLLLLNVVGI). At 391–394 (YKQS) the chain is on the cytoplasmic side. 2 consecutive transmembrane segments (helical) span residues 395 to 415 (RRAIIFAMISILLITVATFFT) and 416 to 436 (YASYILITWLAIIFVLLIVAF). At 437–450 (RRARRLKRPVRMRN) the chain is on the cytoplasmic side. A helical membrane pass occupies residues 451–471 (IVAMLLFSLFILYVNHIFIAG). Topologically, residues 472 to 489 (TLYALDIYTIEMHTSVLR) are extracellular. Residues 490–510 (YYFWLTILIIAIIIGMIAWLF) traverse the membrane as a helical segment. Residues 511–840 (DYQFSKVRIS…SKVMRVIRHK (330 aa)) lie on the Cytoplasmic side of the membrane.

Belongs to the LPG synthase family.

The protein localises to the cell membrane. The catalysed reaction is L-lysyl-tRNA(Lys) + a 1,2-diacyl-sn-glycero-3-phospho-(1'-sn-glycerol) = a 1,2-diacyl-sn-glycero-3-phospho-1'-(3'-O-L-lysyl)-sn-glycerol + tRNA(Lys). Functionally, catalyzes the transfer of a lysyl group from L-lysyl-tRNA(Lys) to membrane-bound phosphatidylglycerol (PG), which produces lysylphosphatidylglycerol (LPG), a major component of the bacterial membrane with a positive net charge. LPG synthesis contributes to bacterial virulence as it is involved in the resistance mechanism against cationic antimicrobial peptides (CAMP) produces by the host's immune system (defensins, cathelicidins) and by the competing microorganisms (bacteriocins). In fact, the modification of anionic phosphatidylglycerol with positively charged L-lysine results in repulsion of the peptides. The chain is Phosphatidylglycerol lysyltransferase (mprF) from Staphylococcus aureus (strain Mu50 / ATCC 700699).